A 253-amino-acid polypeptide reads, in one-letter code: CD151 antigen (253 aa).

Residues 1-18 (MGEFNEKKTTCGTVCLKY) are Cytoplasmic-facing. 2 S-palmitoyl cysteine lipidation sites follow: Cys-11 and Cys-15. The helical transmembrane segment at 19 to 39 (LLFTYNCCFWLAGLAVMAVGI) threads the bilayer. Residues 40–57 (WTLALKSDYISLLASGTY) lie on the Extracellular side of the membrane. The chain crosses the membrane as a helical span at residues 58–78 (LATAYILVVAGAVVMVTGVLG). Topologically, residues 79-91 (CCATFKERRNLLR) are cytoplasmic. A helical membrane pass occupies residues 92–112 (LYFILLLIIFLLEIIAGVLAY). Over 113–221 (VYYQQLNTEL…LETFIQEHLR (109 aa)) the chain is Extracellular. Residue Asn-159 is glycosylated (N-linked (GlcNAc...) asparagine). A helical transmembrane segment spans residues 222–242 (VIGAVGTGIACVQVFGMIFTC). 2 S-palmitoyl cysteine lipidation sites follow: Cys-242 and Cys-243. Topologically, residues 243–253 (CLYRSLKLEHY) are cytoplasmic.

It belongs to the tetraspanin (TM4SF) family. In terms of assembly, interacts with integrins ITGA3:ITGB1, ITGA5:ITGB1, ITGA3:ITGB1 and ITGA6:ITGB4 and with CD9 and CD181. Interacts (via the second extracellular domain) with integrin ITGAV:ITGB3. Interacts with ITGA3; this interaction modulates ITGA3 glycosylation pattern. Interacts with F11R. Interacts with RAC1 and CDC42; these interactions mediate physical association of RAC1 and CDC42 with integrin adhesion receptor complexes. In terms of processing, palmitoylated. Palmitoylation by ZDHHC2 regulates CD151 expression, association with other tetraspanin family proteins and function in cell adhesion. Post-translationally, ubiquitinated by RNF128 on lysine residues present in the tetraspanin amino terminus via 'Lys-48'-linked ubiquitin leading to proteasomal degradation.

The protein resides in the cell membrane. Its function is as follows. Structural component of specialized membrane microdomains known as tetraspanin-enriched microdomains (TERMs), which act as platforms for receptor clustering and signaling. Plays a role in various cellular and molecular mechanism through its association with both integrin and non-integrin proteins. These interactions facilitate critical cellular functions, including cell-to-cell communication, wound healing, platelet aggregation, trafficking, cell motility, and angiogenesis. Via interaction with JAM-A/F11R and integrin ITGA3:ITGB1, promotes the recruitment of signaling molecules such as RAC1, CDC42 and RhoGTPases to facilitate the polarization of epithelial cells and the reorganization of the actin cytoskeleton, which are critical steps in cell migration process. Regulates the glycosylation pattern of ITGA3:ITGB1 thereby modulating its activity. Plays an essential role in the maintenance of central laminin-binding integrin ITGA6:ITGB4-containing adhesion complexes. Essential for the proper assembly of the glomerular and tubular basement membranes in kidney. Contributes to T-cell activation by modulating integrin signaling leading to activation of downstream targets PTK2 and MAPK1/MAPK3. The protein is CD151 antigen (CD151) of Chlorocebus aethiops (Green monkey).